A 313-amino-acid chain; its full sequence is Ribosomal RNA small subunit methyltransferase H (313 aa).

Residues 35 to 37 (GGH), Asp-55, Phe-80, Asp-102, and Gln-109 each bind S-adenosyl-L-methionine.

It belongs to the methyltransferase superfamily. RsmH family.

It localises to the cytoplasm. The catalysed reaction is cytidine(1402) in 16S rRNA + S-adenosyl-L-methionine = N(4)-methylcytidine(1402) in 16S rRNA + S-adenosyl-L-homocysteine + H(+). Its function is as follows. Specifically methylates the N4 position of cytidine in position 1402 (C1402) of 16S rRNA. This chain is Ribosomal RNA small subunit methyltransferase H, found in Shewanella loihica (strain ATCC BAA-1088 / PV-4).